The chain runs to 486 residues: Maternal protein exuperantia (486 aa).

Disordered stretches follow at residues 202 to 233 (NARV…RDEF) and 386 to 477 (STIR…ISLP). Residues 218–233 (ADKHVKNGLQKERDEF) show a composition bias toward basic and acidic residues. Residues 387–397 (TIRRRNKRNTP) are compositionally biased toward basic residues. Polar residues-rich tracts occupy residues 420–437 (KSQS…TPSP) and 464–476 (SALN…SISL).

In terms of biological role, ensures the proper localization of the mRNA of the bicoid gene to the anterior regions of the oocyte thus playing a fundamental role in the establishment of the polarity of the oocyte. May bind the bcd mRNA. The chain is Maternal protein exuperantia (exu) from Drosophila virilis (Fruit fly).